A 319-amino-acid chain; its full sequence is L-lactate dehydrogenase (319 aa).

NAD(+) is bound by residues valine 17, aspartate 38, lysine 43, tyrosine 69, and 83–84 (GA). Positions 86 and 92 each coordinate substrate. NAD(+)-binding positions include threonine 105, 122–124 (ATN), and serine 147. Residue 124-127 (NPVD) coordinates substrate. 152 to 155 (DTAR) lines the substrate pocket. Positions 157 and 172 each coordinate beta-D-fructose 1,6-bisphosphate. Histidine 179 serves as the catalytic Proton acceptor. The residue at position 224 (tyrosine 224) is a Phosphotyrosine. A substrate-binding site is contributed by threonine 233.

It belongs to the LDH/MDH superfamily. LDH family. As to quaternary structure, homotetramer.

It localises to the cytoplasm. The catalysed reaction is (S)-lactate + NAD(+) = pyruvate + NADH + H(+). The protein operates within fermentation; pyruvate fermentation to lactate; (S)-lactate from pyruvate: step 1/1. Its activity is regulated as follows. Allosterically activated by fructose 1,6-bisphosphate (FBP). Its function is as follows. Catalyzes the conversion of lactate to pyruvate. This chain is L-lactate dehydrogenase, found in Geobacillus sp. (strain WCH70).